We begin with the raw amino-acid sequence, 381 residues long: Prostatic acid phosphatase (381 aa).

The signal sequence occupies residues 1–31 (MRAVPLHLVGTASLTLGFLLLLSLRLDPGQA). Residue arginine 42 participates in substrate binding. Histidine 43 functions as the Nucleophile in the catalytic mechanism. Arginine 46 is a binding site for substrate. N-linked (GlcNAc...) asparagine glycosylation is present at asparagine 93. Arginine 110 contributes to the substrate binding site. Intrachain disulfides connect cysteine 160–cysteine 371, cysteine 214–cysteine 312, and cysteine 346–cysteine 350. The N-linked (GlcNAc...) asparagine glycan is linked to asparagine 219. Histidine 288 contacts substrate. The Proton donor role is filled by aspartate 289. Residue asparagine 332 is glycosylated (N-linked (GlcNAc...) asparagine).

It belongs to the histidine acid phosphatase family. As to quaternary structure, homodimer; dimer formation is required for phosphatase activity. N-glycosylated. Expressed in prostate epithelium. Also expressed in the pelvic nerve and sacral spinal cord. Localizes in peptidergic and non-peptidergic nociceptive (pain-sensing) neurons.

It localises to the secreted. The protein resides in the cell membrane. The protein localises to the lysosome membrane. The catalysed reaction is a phosphate monoester + H2O = an alcohol + phosphate. It catalyses the reaction a ribonucleoside 5'-phosphate + H2O = a ribonucleoside + phosphate. It carries out the reaction 1-(9Z-octadecenoyl)-sn-glycero-3-phosphate + H2O = 1-(9Z-octadecenoyl)-sn-glycerol + phosphate. The enzyme catalyses O-phospho-L-tyrosyl-[protein] + H2O = L-tyrosyl-[protein] + phosphate. Inhibited by L(+)-tartrate. A non-specific tyrosine phosphatase that dephosphorylates a diverse number of substrates under acidic conditions (pH 4-6) including alkyl, aryl, and acyl orthophosphate monoesters and phosphorylated proteins. Has lipid phosphatase activity and inactivates lysophosphatidic acid in seminal plasma. In terms of biological role, in addition to its tyrosine phosphatase activity, also has ecto-5'-nucleotidase activity in dorsal root ganglion (DRG) neurons. Generates adenosine from AMP. This extracellular adenosine leads to a decrease in chronic pain by activating A1R in nociceptive neurons. This is Prostatic acid phosphatase (Acp3) from Rattus norvegicus (Rat).